Consider the following 191-residue polypeptide: MTRVVLSIGSNLGDRLAWLQSAVDGLGDAVVAVSPVYDTVPWGAVEQRSFLNAVVIADGPAYDTKAWLCRAQELERNAGRVRGQRWGARTLDVDLISCYQTSGATTGAVEVITCESNLTLPHPRAHLRAFVLVPWLAVDSDAELTVAGRAQRVDRLLAEMEPTEREGVRLTNLTLKLKRSSPARPVSPKSD.

It belongs to the HPPK family.

It catalyses the reaction 6-hydroxymethyl-7,8-dihydropterin + ATP = (7,8-dihydropterin-6-yl)methyl diphosphate + AMP + H(+). It participates in cofactor biosynthesis; tetrahydrofolate biosynthesis; 2-amino-4-hydroxy-6-hydroxymethyl-7,8-dihydropteridine diphosphate from 7,8-dihydroneopterin triphosphate: step 4/4. Catalyzes the transfer of pyrophosphate from adenosine triphosphate (ATP) to 6-hydroxymethyl-7,8-dihydropterin, an enzymatic step in folate biosynthesis pathway. The polypeptide is 2-amino-4-hydroxy-6-hydroxymethyldihydropteridine pyrophosphokinase (folK) (Mycobacterium leprae (strain TN)).